The following is a 729-amino-acid chain: MLYKGDTLYLDWLEDGIAELVFDAPGSVNKLDTATVASLGEAIGVLEQQSDLKGLLLRSNKAAFIVGADITEFLSLFLVPEEQLSQWLHFANSVFNRLEDLPVPTIAAVNGYALGGGCECVLATDYRLATPDLRIGLPETKLGIMPGFGGSVRMPRMLGADSALEIIAAGKDVGADQALKIGLVDGVVKAEKLVEGAMAILRQAINGDLDWKAKRQPKLEPLKLSKIEATMSFTIAKGMVAQTAGKHYPAPITAVKTIEAAARFGREEALNLENKSFVPLAHTNEARALVGIFLNDQYVKGKAKKLTKDVETPKQAAVLGAGIMGGGIAYQSAWKGVPVVMKDINDKSLTLGMTEAAKLLNKQLERGKIDGLKLAGVISTIHPTLDYAGFDRVDIVVEAVVENPKVKKAVLAETEQKVRPDTVLASNTSTIPISELANALERPENFCGMHFFNPVHRMPLVEIIRGEKSSDETIAKVVAWASKMGKTPIVVNDCPGFFVNRVLFPYFAGFSQLLRDGADFRKIDKVMEKQFGWPMGPAYLLDVVGIDTAHHAQAVMAAGFPQRMQKDYRDAIDALFDANRFGQKNGLGFWRYKEDSKGKPKKEEDAVVDDLLAEVSQPKRDFSEEEIIARMMIPMVNEVVRCLEEGIIATPAEADMALVYGLGFPPFHGGAFRWLDTLGSAKYLDMAQQYQHLGPLYEVPEGLRNKARHNEPYYPPVEPARPVGDLKTA.

An enoyl-CoA hydratase/isomerase region spans residues 1 to 189 (MLYKGDTLYL…KIGLVDGVVK (189 aa)). Asp-296 provides a ligand contact to substrate. The segment at 311–729 (ETPKQAAVLG…ARPVGDLKTA (419 aa)) is 3-hydroxyacyl-CoA dehydrogenase. NAD(+)-binding positions include Met-324, Asp-343, 400 to 402 (VVE), Lys-407, and Ser-429. The For 3-hydroxyacyl-CoA dehydrogenase activity role is filled by His-450. NAD(+) is bound at residue Asn-453. Residues Asn-500 and Tyr-660 each coordinate substrate. Residues 708–729 (RHNEPYYPPVEPARPVGDLKTA) form a disordered region.

It in the N-terminal section; belongs to the enoyl-CoA hydratase/isomerase family. This sequence in the C-terminal section; belongs to the 3-hydroxyacyl-CoA dehydrogenase family. Heterotetramer of two alpha chains (FadB) and two beta chains (FadA).

The catalysed reaction is a (3S)-3-hydroxyacyl-CoA + NAD(+) = a 3-oxoacyl-CoA + NADH + H(+). It catalyses the reaction a (3S)-3-hydroxyacyl-CoA = a (2E)-enoyl-CoA + H2O. It carries out the reaction a 4-saturated-(3S)-3-hydroxyacyl-CoA = a (3E)-enoyl-CoA + H2O. The enzyme catalyses (3S)-3-hydroxybutanoyl-CoA = (3R)-3-hydroxybutanoyl-CoA. The catalysed reaction is a (3Z)-enoyl-CoA = a 4-saturated (2E)-enoyl-CoA. It catalyses the reaction a (3E)-enoyl-CoA = a 4-saturated (2E)-enoyl-CoA. It functions in the pathway lipid metabolism; fatty acid beta-oxidation. In terms of biological role, involved in the aerobic and anaerobic degradation of long-chain fatty acids via beta-oxidation cycle. Catalyzes the formation of 3-oxoacyl-CoA from enoyl-CoA via L-3-hydroxyacyl-CoA. It can also use D-3-hydroxyacyl-CoA and cis-3-enoyl-CoA as substrate. This Escherichia coli O7:K1 (strain IAI39 / ExPEC) protein is Fatty acid oxidation complex subunit alpha.